We begin with the raw amino-acid sequence, 275 residues long: Formamidopyrimidine-DNA glycosylase (275 aa).

P2 functions as the Schiff-base intermediate with DNA in the catalytic mechanism. E3 acts as the Proton donor in catalysis. K59 functions as the Proton donor; for beta-elimination activity in the catalytic mechanism. H93, R112, and R153 together coordinate DNA. The FPG-type zinc finger occupies 238–272 (NVYDRVGKPCPRCQTAIERIVVAQRSTFFCPLCQV). R262 (proton donor; for delta-elimination activity) is an active-site residue.

It belongs to the FPG family. As to quaternary structure, monomer. It depends on Zn(2+) as a cofactor.

The enzyme catalyses Hydrolysis of DNA containing ring-opened 7-methylguanine residues, releasing 2,6-diamino-4-hydroxy-5-(N-methyl)formamidopyrimidine.. It catalyses the reaction 2'-deoxyribonucleotide-(2'-deoxyribose 5'-phosphate)-2'-deoxyribonucleotide-DNA = a 3'-end 2'-deoxyribonucleotide-(2,3-dehydro-2,3-deoxyribose 5'-phosphate)-DNA + a 5'-end 5'-phospho-2'-deoxyribonucleoside-DNA + H(+). Its function is as follows. Involved in base excision repair of DNA damaged by oxidation or by mutagenic agents. Acts as a DNA glycosylase that recognizes and removes damaged bases. Has a preference for oxidized purines, such as 7,8-dihydro-8-oxoguanine (8-oxoG). Has AP (apurinic/apyrimidinic) lyase activity and introduces nicks in the DNA strand. Cleaves the DNA backbone by beta-delta elimination to generate a single-strand break at the site of the removed base with both 3'- and 5'-phosphates. The sequence is that of Formamidopyrimidine-DNA glycosylase from Chloroflexus aggregans (strain MD-66 / DSM 9485).